Reading from the N-terminus, the 352-residue chain is Nuclear receptor subfamily 1 group I member 3 (352 aa).

The segment at residues 8 to 83 (LRNCVVCGDQ…AGMRKDMILS (76 aa)) is a DNA-binding region (nuclear receptor). An NR C4-type zinc finger spans residues 11-31 (CVVCGDQATGYHFNALTCEGC). Position 38 is a phosphothreonine; by PKC (T38). The NR C4-type zinc finger occupies 47 to 71 (CPFAGSCEVSKTQRRHCPACRLQKC). Positions 109-352 (EQEELIRTLL…MMPLLQEICS (244 aa)) constitute an NR LBD domain.

The protein belongs to the nuclear hormone receptor family. NR1 subfamily. Interacts with ECT2. Heterodimer of NR1I3 and RXR. Interacts with PSMC4. Directly interacts with DNAJC7. The DNAJC7-NR1I3 complex may also include HSP90. Interacts with CRY1. Interacts with CRY2 in a ligand-dependent manner. Post-translationally, phosphorylated at Thr-38 by PKC, dephosphorylation of Thr-38 is required for nuclear translocation and activation. In terms of tissue distribution, predominantly expressed in liver.

It is found in the nucleus. The protein localises to the cytoplasm. The protein resides in the cytoskeleton. Its function is as follows. Binds and transactivates the retinoic acid response elements that control expression of the retinoic acid receptor beta 2 and alcohol dehydrogenase 3 genes. Transactivates both the phenobarbital responsive element module of the human CYP2B6 gene and the CYP3A4 xenobiotic response element. This chain is Nuclear receptor subfamily 1 group I member 3 (NR1I3), found in Homo sapiens (Human).